The sequence spans 340 residues: UDP-glucose 4-epimerase (340 aa).

Residues 12–13 (FI), 32–37 (DNYGNS), 59–60 (DV), 81–85 (FAGLK), Asn100, Ser125, Tyr150, Lys154, and Phe179 contribute to the NAD(+) site. 2 residues coordinate substrate: Ser125 and Tyr150. Catalysis depends on Tyr150, which acts as the Proton acceptor. Substrate is bound by residues Asn180, 200 to 201 (NL), 217 to 219 (QVY), Arg232, and 292 to 295 (RPGD).

It belongs to the NAD(P)-dependent epimerase/dehydratase family. In terms of assembly, homodimer. NAD(+) serves as cofactor.

It carries out the reaction UDP-alpha-D-glucose = UDP-alpha-D-galactose. Its pathway is carbohydrate metabolism; galactose metabolism. Functionally, involved in the metabolism of galactose. Catalyzes the conversion of UDP-galactose (UDP-Gal) to UDP-glucose (UDP-Glc) through a mechanism involving the transient reduction of NAD. Can also epimerize UDP-GalNAc to UDP-GlcNAc. Involved in the lacto-N-biose I/galacto-N-biose (LNB/GNB) degradation pathway, which is important for host intestinal colonization by bifidobacteria. The chain is UDP-glucose 4-epimerase (lnpD) from Bifidobacterium longum subsp. longum (strain ATCC 15707 / DSM 20219 / JCM 1217 / NCTC 11818 / E194b).